A 160-amino-acid chain; its full sequence is Putative 4-hydroxy-4-methyl-2-oxoglutarate aldolase (160 aa).

Substrate is bound by residues 76-79 (GGNL) and arginine 98. A divalent metal cation is bound at residue aspartate 99.

It belongs to the class II aldolase/RraA-like family. As to quaternary structure, homotrimer. Requires a divalent metal cation as cofactor.

The catalysed reaction is 4-hydroxy-4-methyl-2-oxoglutarate = 2 pyruvate. It catalyses the reaction oxaloacetate + H(+) = pyruvate + CO2. Catalyzes the aldol cleavage of 4-hydroxy-4-methyl-2-oxoglutarate (HMG) into 2 molecules of pyruvate. Also contains a secondary oxaloacetate (OAA) decarboxylase activity due to the common pyruvate enolate transition state formed following C-C bond cleavage in the retro-aldol and decarboxylation reactions. In Deinococcus radiodurans (strain ATCC 13939 / DSM 20539 / JCM 16871 / CCUG 27074 / LMG 4051 / NBRC 15346 / NCIMB 9279 / VKM B-1422 / R1), this protein is Putative 4-hydroxy-4-methyl-2-oxoglutarate aldolase.